The chain runs to 98 residues: UPF0235 protein Ping_3043 (98 aa).

The protein belongs to the UPF0235 family.

The polypeptide is UPF0235 protein Ping_3043 (Psychromonas ingrahamii (strain DSM 17664 / CCUG 51855 / 37)).